A 325-amino-acid polypeptide reads, in one-letter code: MSSYSRITGTGSYLPPRRVTNDDLAKELATRGIETSDQWIVERTGIHARHFAAPEVTSSDLALEAARHALEAAGRKAEDIDLIIVATSTPDMVFPSSAAILQNKLGVAGCPAFDVQAVCSGFVYALTVADAMIRTGTARCALVVGAEVFSRILDFNDRTTCVLFGDGAGAVVLEASEEPGILASDLHADGKHVGILCVPGHVSGGNVLGTPLLHMDGQAVFKLAVRVLEDAARATLAKAGKTEADIDWLIPHQANIRIMEGTAKKLKLPREKLIVTVNEHGNTSAASIPLALDEAVRSGKVKKGETVMLEGVGGGFTWGAVLLNL.

Catalysis depends on residues cysteine 119 and histidine 252. The interval 253–257 is ACP-binding; the sequence is QANIR. Asparagine 282 is an active-site residue.

This sequence belongs to the thiolase-like superfamily. FabH family. In terms of assembly, homodimer.

The protein resides in the cytoplasm. The catalysed reaction is malonyl-[ACP] + acetyl-CoA + H(+) = 3-oxobutanoyl-[ACP] + CO2 + CoA. Its pathway is lipid metabolism; fatty acid biosynthesis. Its function is as follows. Catalyzes the condensation reaction of fatty acid synthesis by the addition to an acyl acceptor of two carbons from malonyl-ACP. Catalyzes the first condensation reaction which initiates fatty acid synthesis and may therefore play a role in governing the total rate of fatty acid production. Possesses both acetoacetyl-ACP synthase and acetyl transacylase activities. Its substrate specificity determines the biosynthesis of branched-chain and/or straight-chain of fatty acids. This is Beta-ketoacyl-[acyl-carrier-protein] synthase III from Variovorax paradoxus (strain S110).